A 501-amino-acid chain; its full sequence is 2-phosphoxylose phosphatase 1 (501 aa).

Topologically, residues Met1–Arg6 are cytoplasmic. Residues Phe7–Phe27 form a helical; Signal-anchor for type II membrane protein membrane-spanning segment. The Lumenal segment spans residues Ser28–Phe501. His120 acts as the Nucleophile in catalysis. N-linked (GlcNAc...) asparagine glycosylation is found at Asn328 and Asn377. The active-site Proton donor is Asp402. Residue Asn488 is glycosylated (N-linked (GlcNAc...) asparagine).

This sequence belongs to the histidine acid phosphatase family.

It is found in the golgi apparatus membrane. It catalyses the reaction 3-O-[beta-D-GlcA-(1-&gt;3)-beta-D-Gal-(1-&gt;3)-beta-D-Gal-(1-&gt;4)-beta-D-2-O-P-Xyl]-L-seryl-[protein] + H2O = 3-O-(beta-D-GlcA-(1-&gt;3)-beta-D-Gal-(1-&gt;3)-beta-D-Gal-(1-&gt;4)-beta-D-Xyl)-L-seryl-[protein] + phosphate. Its function is as follows. Responsible for the 2-O-dephosphorylation of xylose in the glycosaminoglycan-protein linkage region of proteoglycans thereby regulating the amount of mature glycosaminoglycan (GAG) chains. Sulfated glycosaminoglycans (GAGs), including heparan sulfate and chondroitin sulfate, are synthesized on the so-called common GAG-protein linkage region (GlcUAbeta1-3Galbeta1-3Galbeta1-4Xylbeta1-O-Ser) of core proteins, which is formed by the stepwise addition of monosaccharide residues by the respective specific glycosyltransferases. Xylose 2-O-dephosphorylation during completion of linkage region formation is a prerequisite for the initiation and efficient elongation of the repeating disaccharide region of GAG chains. The chain is 2-phosphoxylose phosphatase 1 from Xenopus tropicalis (Western clawed frog).